The sequence spans 218 residues: Claudin-5 (218 aa).

The Cytoplasmic portion of the chain corresponds to 1 to 7 (MGSAALE). A helical membrane pass occupies residues 8–28 (ILGLVLCLVGWVGLILACGLP). The Extracellular segment spans residues 29 to 81 (MWQVTAFLDHNIVTAQTTWKGLWMSCVVQSTGHMQCKVYESVLALSAEVQAAR). Residues 82 to 102 (ALTVGAVLLALVALFVTLTGA) form a helical membrane-spanning segment. Residues 103–123 (QCTTCVAPGPVKARVALTGGA) are Cytoplasmic-facing. A helical transmembrane segment spans residues 124–144 (LYAVCGLLALVPLCWFANIVV). Residues 145-160 (REFYDPTVPVSQKYEL) lie on the Extracellular side of the membrane. A helical transmembrane segment spans residues 161 to 181 (GAALYIGWAASALLMCGGGLV). Topologically, residues 182-218 (CCGAWVCTGRPEFSFPVKYSAPRRPTANGDYDKKNYV) are cytoplasmic. Residues 217 to 218 (YV) form an interactions with TJP1, TJP2 and TJP3 region.

The protein belongs to the claudin family. As to quaternary structure, interacts with MPDZ. Directly interacts with TJP1/ZO-1, TJP2/ZO-2 and TJP3/ZO-3. As to expression, widely expressed with highest levels in the lung.

Its subcellular location is the cell junction. The protein resides in the tight junction. It is found in the cell membrane. Plays a major role in tight junction-specific obliteration of the intercellular space, through calcium-independent cell-adhesion activity. This Mus musculus (Mouse) protein is Claudin-5 (Cldn5).